The chain runs to 392 residues: Phosphoglycerate kinase (392 aa).

Substrate is bound by residues 21–23 (DMN), Arg-36, 59–62 (HLGR), Arg-114, and Arg-147. Residues Lys-198, Glu-320, and 346-349 (GGDT) contribute to the ATP site.

Belongs to the phosphoglycerate kinase family. In terms of assembly, monomer.

The protein resides in the cytoplasm. The catalysed reaction is (2R)-3-phosphoglycerate + ATP = (2R)-3-phospho-glyceroyl phosphate + ADP. The protein operates within carbohydrate degradation; glycolysis; pyruvate from D-glyceraldehyde 3-phosphate: step 2/5. In Neisseria meningitidis serogroup C (strain 053442), this protein is Phosphoglycerate kinase.